Reading from the N-terminus, the 3333-residue chain is Laminin subunit alpha-3 (3333 aa).

The signal sequence occupies residues 1–35 (MAAAARPRGRALGPVLPPTPLLLLVLRVLPACGAT). Residues 43 to 298 (AGLSLHPTYF…SIKDISIGGQ (256 aa)) enclose the Laminin N-terminal domain. N-linked (GlcNAc...) asparagine glycosylation is found at Asn-142 and Asn-242. Residues 298–728 (QCVCNGHAEV…NNYYFPDLHH (431 aa)) are domain V. 29 disulfide bridges follow: Cys-299–Cys-308, Cys-301–Cys-319, Cys-321–Cys-330, Cys-333–Cys-353, Cys-356–Cys-365, Cys-358–Cys-390, Cys-393–Cys-402, Cys-405–Cys-423, Cys-426–Cys-436, Cys-428–Cys-443, Cys-445–Cys-454, Cys-457–Cys-467, Cys-491–Cys-503, Cys-493–Cys-509, Cys-511–Cys-520, Cys-523–Cys-533, Cys-536–Cys-548, Cys-538–Cys-555, Cys-557–Cys-566, Cys-569–Cys-586, Cys-601–Cys-610, Cys-613–Cys-628, Cys-631–Cys-645, Cys-633–Cys-652, Cys-654–Cys-663, Cys-666–Cys-681, Cys-684–Cys-696, Cys-686–Cys-703, and Cys-705–Cys-714. Laminin EGF-like domains are found at residues 299–355 (CVCN…ECEA), 356–425 (CNCH…GCIP), 426–469 (CSCD…FCLR), 491–535 (CDCN…ICQA), 536–588 (CWCS…ACDP), 590–630 (GTIN…GCSE), 631–683 (CKCH…GCQG), and 684–728 (CQCD…DLHH). Residues 796-1265 (TEAVSGHITI…VAFYHKGALP (470 aa)) are domain IV 1 (domain IV B). 16 cysteine pairs are disulfide-bonded: Cys-1266/Cys-1278, Cys-1268/Cys-1285, Cys-1287/Cys-1296, Cys-1299/Cys-1309, Cys-1312/Cys-1319, Cys-1314/Cys-1326, Cys-1328/Cys-1337, Cys-1340/Cys-1353, Cys-1356/Cys-1371, Cys-1358/Cys-1378, Cys-1380/Cys-1389, Cys-1392/Cys-1402, Cys-1405/Cys-1417, Cys-1407/Cys-1424, Cys-1426/Cys-1435, and Cys-1438/Cys-1453. 4 consecutive Laminin EGF-like domains span residues 1266–1311 (CECH…RCKP), 1312–1355 (CSCG…GCEG), 1356–1404 (CNCS…ECVP), and 1405–1455 (CNCN…GCTS). The interval 1266–1465 (CECHPTGATG…CFCFGVNNQC (200 aa)) is domain III B. The Laminin IV type A domain occupies 1476 to 1653 (VDMLGWHLET…SGRIALAVEI (178 aa)). The tract at residues 1654–1821 (CACPPAYAGD…DSSPAEECDD (168 aa)) is domain III A. Cystine bridges form between Cys-1687/Cys-1696, Cys-1689/Cys-1703, Cys-1706/Cys-1715, Cys-1718/Cys-1731, Cys-1734/Cys-1746, Cys-1736/Cys-1755, Cys-1757/Cys-1766, and Cys-1769/Cys-1784. 2 consecutive Laminin EGF-like domains span residues 1687–1733 (CNCN…SCRA) and 1734–1786 (CPCP…SCQP). Positions 1787-1821 (CSCNSNGQLGSCHPLTGDCINQEPKDSSPAEECDD) constitute a Laminin EGF-like 15; truncated domain. Residues 1822 to 2389 (CDSCVMTLLN…ARDAASKVAV (568 aa)) are domain II and I. Coiled coils occupy residues 1852–1941 (ASAG…KNVI) and 1987–2169 (KHLR…DELV). The Cell attachment site motif lies at 2278–2280 (RGD). A coiled-coil region spans residues 2322–2388 (RTQNEDFKKA…QARDAASKVA (67 aa)). Asn-2365, Asn-2502, and Asn-2584 each carry an N-linked (GlcNAc...) asparagine glycan. Laminin G-like domains lie at 2390 to 2591 (PMRF…VEPC), 2598 to 2760 (SDKN…TKKC), 2767 to 2927 (VRSA…LGGC), 2986 to 3150 (ALQF…VSSC), and 3157 to 3330 (KGIY…LNGC). 5 disulfides stabilise this stretch: Cys-2561–Cys-2591, Cys-2737–Cys-2760, Cys-2895–Cys-2927, Cys-3127–Cys-3150, and Cys-3302–Cys-3330.

Laminin is a complex glycoprotein, consisting of three different polypeptide chains (alpha, beta, gamma), which are bound to each other by disulfide bonds into a cross-shaped molecule comprising one long and three short arms with globules at each end. Alpha-3 is a subunit of laminin-5 (laminin-332 or epiligrin/kalinin/nicein), laminin-6 (laminin-311 or K-laminin) and laminin-7 (laminin-321 or KS-laminin). Skin; respiratory, urinary, and digestive epithelia and in other specialized tissues with prominent secretory or protective functions. Epithelial basement membrane, and epithelial cell tongue that migrates into a wound bed. A differential and focal expression of the subunit alpha-3 is observed in the CNS.

The protein localises to the secreted. Its subcellular location is the extracellular space. The protein resides in the extracellular matrix. It is found in the basement membrane. Its function is as follows. Binding to cells via a high affinity receptor, laminin is thought to mediate the attachment, migration and organization of cells into tissues during embryonic development by interacting with other extracellular matrix components. Functionally, laminin-5 is thought to be involved in (1) cell adhesion via integrin alpha-3/beta-1 in focal adhesion and integrin alpha-6/beta-4 in hemidesmosomes, (2) signal transduction via tyrosine phosphorylation of pp125-FAK and p80, (3) differentiation of keratinocytes. The protein is Laminin subunit alpha-3 (LAMA3) of Homo sapiens (Human).